The sequence spans 92 residues: Small ribosomal subunit protein uS19 (92 aa).

It belongs to the universal ribosomal protein uS19 family.

Its function is as follows. Protein S19 forms a complex with S13 that binds strongly to the 16S ribosomal RNA. This chain is Small ribosomal subunit protein uS19, found in Shewanella putrefaciens (strain CN-32 / ATCC BAA-453).